A 368-amino-acid polypeptide reads, in one-letter code: Isocitrate dehydrogenase [NAD] regulatory subunit 3, mitochondrial (368 aa).

The N-terminal 26 residues, 1–26, are a transit peptide targeting the mitochondrion; sequence MARRSVSIFNRLLANPPSPFTSLSRS.

Belongs to the isocitrate and isopropylmalate dehydrogenases family. In terms of assembly, heterooligomer of catalytic and regulatory subunits. Interacts with 14-3-3-like proteins GRF1 GRF3 and GRF8. As to expression, mainly expressed at a low level in pollen.

Its subcellular location is the mitochondrion. Performs an essential role in the oxidative function of the citric acid cycle. The polypeptide is Isocitrate dehydrogenase [NAD] regulatory subunit 3, mitochondrial (IDH3) (Arabidopsis thaliana (Mouse-ear cress)).